The chain runs to 90 residues: Large ribosomal subunit protein uL16c (90 aa).

It belongs to the universal ribosomal protein uL16 family. As to quaternary structure, part of the 50S ribosomal subunit.

It is found in the plastid. Its subcellular location is the chloroplast. This Oenothera ammophila (Evening primerose) protein is Large ribosomal subunit protein uL16c (rpl16).